A 285-amino-acid chain; its full sequence is MITSKTSFLALIGNPVSHSLSPIMQNAAIQYLGLDLIYMAIPCKNEDLEIVVNSIKKMNCKGLNITIPFKQKVFDMCSEISPVAKKVKAINTLKLNDNKNWIGTNTDIDGFIYPLKNLNLIKKSSLILGSGGAARSVIQGLIELKLSKITIISRKRNSLNELITNFKNDIEIKGLLSTNNEIKNLIQETDLIINTTPVGMSNTTNTDELPFGQGFWDSINSKTIVYDLIYNPSPTPFLKFCDKKGCMTIDGTQMLIAQGAKSLSFWTNGLEVPYEVMHDALKEYL.

Residues Ser-19–Ser-21 and Thr-66 contribute to the shikimate site. Lys-70 serves as the catalytic Proton acceptor. Residues Asn-91 and Asp-107 each coordinate shikimate. NADP(+) is bound by residues Gly-129–Ala-133 and Leu-228. Tyr-230 lines the shikimate pocket. Gly-251 contributes to the NADP(+) binding site.

This sequence belongs to the shikimate dehydrogenase family. Homodimer.

It catalyses the reaction shikimate + NADP(+) = 3-dehydroshikimate + NADPH + H(+). Its pathway is metabolic intermediate biosynthesis; chorismate biosynthesis; chorismate from D-erythrose 4-phosphate and phosphoenolpyruvate: step 4/7. Functionally, involved in the biosynthesis of the chorismate, which leads to the biosynthesis of aromatic amino acids. Catalyzes the reversible NADPH linked reduction of 3-dehydroshikimate (DHSA) to yield shikimate (SA). The polypeptide is Shikimate dehydrogenase (NADP(+)) (Prochlorococcus marinus subsp. pastoris (strain CCMP1986 / NIES-2087 / MED4)).